The sequence spans 335 residues: Nucleoid-associated protein PC1_1634 (335 aa).

It belongs to the YejK family.

It localises to the cytoplasm. The protein localises to the nucleoid. The sequence is that of Nucleoid-associated protein PC1_1634 from Pectobacterium carotovorum subsp. carotovorum (strain PC1).